A 550-amino-acid chain; its full sequence is Endonuclease/exonuclease/phosphatase family domain-containing protein 1 (550 aa).

Residues E39–Y68 form the HhH domain. Residues S194 to S213 show a composition bias toward polar residues. A disordered region spans residues S194–P216.

The sequence is that of Endonuclease/exonuclease/phosphatase family domain-containing protein 1 (eepd1) from Danio rerio (Zebrafish).